Here is a 115-residue protein sequence, read N- to C-terminus: Large ribosomal subunit protein uL24 (115 aa).

Belongs to the universal ribosomal protein uL24 family. Part of the 50S ribosomal subunit.

One of two assembly initiator proteins, it binds directly to the 5'-end of the 23S rRNA, where it nucleates assembly of the 50S subunit. Functionally, one of the proteins that surrounds the polypeptide exit tunnel on the outside of the subunit. The sequence is that of Large ribosomal subunit protein uL24 from Amoebophilus asiaticus (strain 5a2).